The chain runs to 244 residues: AA9 family lytic polysaccharide monooxygenase B (244 aa).

The N-terminal stretch at 1–19 is a signal peptide; sequence MFLVPLLAALSLSAPKVAA. A Cu(2+)-binding site is contributed by His20. Residue Tyr39 coordinates (1,4-beta-D-glucosyl)n. Cystine bridges form between Cys68/Cys189 and Cys111/Cys115. His99 provides a ligand contact to Cu(2+). Asn152 is a glycosylation site (N-linked (GlcNAc...) asparagine). Residues His178 and Gln184 each contribute to the O2 site. Cu(2+) is bound at residue Tyr186. (1,4-beta-D-glucosyl)n contacts are provided by Asp224, Tyr226, and Glu229. Asn233 is a glycosylation site (N-linked (GlcNAc...) asparagine).

Belongs to the polysaccharide monooxygenase AA9 family. It depends on Cu(2+) as a cofactor.

The protein localises to the secreted. The enzyme catalyses [(1-&gt;4)-beta-D-glucosyl]n+m + reduced acceptor + O2 = 4-dehydro-beta-D-glucosyl-[(1-&gt;4)-beta-D-glucosyl]n-1 + [(1-&gt;4)-beta-D-glucosyl]m + acceptor + H2O.. Its function is as follows. Lytic polysaccharide monooxygenase (LPMO) that depolymerizes crystalline and amorphous polysaccharides via the oxidation of scissile alpha- or beta-(1-4)-glycosidic bonds, yielding specifically C1 oxidation product. Catalysis by LPMOs requires the reduction of the active-site copper from Cu(II) to Cu(I) by a reducing agent and H(2)O(2) or O(2) as a cosubstrate. Displays catalytic activity on insoluble cellulose using I-beta microfibril model substrate. The chain is AA9 family lytic polysaccharide monooxygenase B from Heterobasidion irregulare (strain TC 32-1).